Here is a 248-residue protein sequence, read N- to C-terminus: 3-deoxy-manno-octulosonate cytidylyltransferase (248 aa).

Belongs to the KdsB family.

Its subcellular location is the cytoplasm. The catalysed reaction is 3-deoxy-alpha-D-manno-oct-2-ulosonate + CTP = CMP-3-deoxy-beta-D-manno-octulosonate + diphosphate. It participates in nucleotide-sugar biosynthesis; CMP-3-deoxy-D-manno-octulosonate biosynthesis; CMP-3-deoxy-D-manno-octulosonate from 3-deoxy-D-manno-octulosonate and CTP: step 1/1. Its pathway is bacterial outer membrane biogenesis; lipopolysaccharide biosynthesis. Activates KDO (a required 8-carbon sugar) for incorporation into bacterial lipopolysaccharide in Gram-negative bacteria. This is 3-deoxy-manno-octulosonate cytidylyltransferase from Shigella dysenteriae serotype 1 (strain Sd197).